The chain runs to 271 residues: Aquaporin-2 (271 aa).

At 1 to 11 (MWELRSIAFSR) the chain is on the cytoplasmic side. A helical transmembrane segment spans residues 12 to 32 (AVLAEFLATLLFVFFGLGSAL). Residues 33–40 (NWPQALPS) are Extracellular-facing. The helical transmembrane segment at 41-59 (VLQIAMAFGLAIGTLVQAL) threads the bilayer. Residues 60-64 (GHVSG) are Cytoplasmic-facing. An intramembrane region (discontinuously helical) is located at residues 65 to 74 (AHINPAVTVA). An NPA 1 motif is present at residues 68–70 (NPA). Topologically, residues 75–85 (CLVGCHVSFLR) are cytoplasmic. Residues 86–107 (AVFYVAAQLLGAVAGAALLHEI) traverse the membrane as a helical segment. Residues 108–127 (TPPAIRGDLAVNALNNNSTA) are Extracellular-facing. An N-linked (GlcNAc...) asparagine glycan is attached at N123. The chain crosses the membrane as a helical span at residues 128–148 (GQAVTVELFLTLQLVLCIFAS). Over 149 to 156 (TDERRGDN) the chain is Cytoplasmic. A helical transmembrane segment spans residues 157-176 (VGTPALSIGFSVALGHLLGI). At 177–180 (HYTG) the chain is on the extracellular side. The discontinuously helical intramembrane region spans 181 to 193 (CSMNPARSLAPAI). The NPA 2 signature appears at 184 to 186 (NPA). Over 194 to 201 (VTGKFDDH) the chain is Extracellular. A helical membrane pass occupies residues 202-222 (WVFWIGPLVGAIVASLLYNYV). Residues 223-271 (LFPPAKSLSERLAVLKGLEPDTDWEEREVRRRQSVELHSPQSLPRGSKA) are Cytoplasmic-facing. A disordered region spans residues 251–271 (VRRRQSVELHSPQSLPRGSKA). S256 is subject to Phosphoserine. The span at 261–271 (SPQSLPRGSKA) shows a compositional bias: polar residues.

The protein belongs to the MIP/aquaporin (TC 1.A.8) family. In terms of assembly, homotetramer. Ser-256 phosphorylation is necessary and sufficient for expression at the apical membrane. Endocytosis is not phosphorylation-dependent. In terms of processing, N-glycosylated.

The protein resides in the apical cell membrane. Its subcellular location is the basolateral cell membrane. It localises to the cell membrane. The protein localises to the cytoplasmic vesicle membrane. It is found in the golgi apparatus. The protein resides in the trans-Golgi network membrane. The enzyme catalyses H2O(in) = H2O(out). It catalyses the reaction glycerol(in) = glycerol(out). In terms of biological role, forms a water-specific channel that provides the plasma membranes of renal collecting duct with high permeability to water, thereby permitting water to move in the direction of an osmotic gradient. Could also be permeable to glycerol. This Bos taurus (Bovine) protein is Aquaporin-2.